Here is a 290-residue protein sequence, read N- to C-terminus: tRNA dimethylallyltransferase (290 aa).

9–16 (GPTASGKT) serves as a coordination point for ATP. 11 to 16 (TASGKT) provides a ligand contact to substrate. The segment at 34–37 (DSTQ) is interaction with substrate tRNA.

The protein belongs to the IPP transferase family. In terms of assembly, monomer. Mg(2+) serves as cofactor.

It carries out the reaction adenosine(37) in tRNA + dimethylallyl diphosphate = N(6)-dimethylallyladenosine(37) in tRNA + diphosphate. Functionally, catalyzes the transfer of a dimethylallyl group onto the adenine at position 37 in tRNAs that read codons beginning with uridine, leading to the formation of N6-(dimethylallyl)adenosine (i(6)A). This chain is tRNA dimethylallyltransferase, found in Phytoplasma australiense.